The chain runs to 106 residues: U1-lycotoxin-Ls1z (106 aa).

The N-terminal stretch at 1-19 (MKVLVVVALLVTLISYSSS) is a signal peptide. A propeptide spanning residues 20–40 (EGIDDLEADELLSLMANEQTR) is cleaved from the precursor. Cystine bridges form between C43/C58, C50/C67, C57/C85, and C69/C83.

Belongs to the neurotoxin 19 (CSTX) family. 03 subfamily. Expressed by the venom gland.

It localises to the secreted. This chain is U1-lycotoxin-Ls1z, found in Lycosa singoriensis (Wolf spider).